Here is a 180-residue protein sequence, read N- to C-terminus: Ribosome rescue factor SmrB (180 aa).

One can recognise a Smr domain in the interval 98-173 (LDLHGLTQLQ…GNAALLVLVA (76 aa)).

This sequence belongs to the SmrB family. In terms of assembly, associates with collided ribosomes, but not with correctly translating polysomes.

Its function is as follows. Acts as a ribosome collision sensor. Detects stalled/collided disomes (pairs of ribosomes where the leading ribosome is stalled and a second ribosome has collided with it) and endonucleolytically cleaves mRNA at the 5' boundary of the stalled ribosome. Stalled/collided disomes form a new interface (primarily via the 30S subunits) that binds SmrB. Cleaved mRNA becomes available for tmRNA ligation, leading to ribosomal subunit dissociation and rescue of stalled ribosomes. This Pectobacterium atrosepticum (strain SCRI 1043 / ATCC BAA-672) (Erwinia carotovora subsp. atroseptica) protein is Ribosome rescue factor SmrB.